A 382-amino-acid polypeptide reads, in one-letter code: Mannitol-1-phosphate 5-dehydrogenase (382 aa).

4–15 provides a ligand contact to NAD(+); sequence AVHFGAGNIGRG.

It belongs to the mannitol dehydrogenase family.

The enzyme catalyses D-mannitol 1-phosphate + NAD(+) = beta-D-fructose 6-phosphate + NADH + H(+). The chain is Mannitol-1-phosphate 5-dehydrogenase from Vibrio vulnificus (strain YJ016).